A 340-amino-acid polypeptide reads, in one-letter code: MNKTAEELDSRNCASESLTNALISITMKFNFIFIITVVLISYCFTWLAIQALWKHNIFSNSTRLILIVCLLNSVVHQTTMLETRITQAYRSVVYDSEPCKLLFRSSDCVFELYLYYPTGYFSTYSVFSLTFDRLISHYKSRYYHMHQYFIATSLLVLQLLLTMFSFYIVFYGVSLAGYVPMCNFRPELTVYYGAINNVRTGVMVSCIIVTMFVYYVCVKSEKQIQKCSYSPGERYSAYENVTTSQSICISIVLQFSCIMISSFGSNLLIHITSKTTVSEEVFYAIVSFLPGVTYANLCLPLVIYFKTKLTTRNRKNRIAVMTSMYGDAGEHIDRLKRSWE.

The next 6 membrane-spanning stretches (helical) occupy residues 29–49 (FNFIFIITVVLISYCFTWLAI), 109–129 (VFELYLYYPTGYFSTYSVFSL), 149–169 (FIATSLLVLQLLLTMFSFYIV), 198–218 (VRTGVMVSCIIVTMFVYYVCV), 249–269 (ISIVLQFSCIMISSFGSNLLI), and 285–305 (IVSFLPGVTYANLCLPLVIYF).

This sequence belongs to the nematode receptor-like protein sra family.

The protein resides in the membrane. This Caenorhabditis elegans protein is Serpentine receptor class alpha-18 (sra-18).